We begin with the raw amino-acid sequence, 323 residues long: Sphingolipid delta(4)-desaturase DES1 (323 aa).

Residue Gly2 is the site of N-myristoyl glycine attachment. Transmembrane regions (helical) follow at residues 41–61 (PNLI…FYLV) and 68–88 (WLMF…TLAI). The Histidine box-1 motif lies at 89–93 (HEISH). The helical transmembrane segment at 104 to 124 (WNRWFGMFANLSLGVPYSISF) threads the bilayer. The Histidine box-2 motif lies at 128-132 (HMDHH). 3 helical membrane passes run 152-172 (FFCT…FYAF), 184-204 (HLEV…YYVF), and 210-230 (VYML…GHFI). The short motif at 259 to 263 (HNEHH) is the Histidine box-3 element. Position 307 is a phosphoserine (Ser307).

It belongs to the fatty acid desaturase type 1 family. DEGS subfamily. In terms of assembly, interacts with RLBP1; the interaction increases synthesis of chromophore-precursors by DEGS1. Post-translationally, myristoylation can target the enzyme to the mitochondria leading to an increase in ceramide levels.

The protein resides in the mitochondrion membrane. The protein localises to the endoplasmic reticulum membrane. The enzyme catalyses an N-acylsphinganine + 2 Fe(II)-[cytochrome b5] + O2 + 2 H(+) = an N-acylsphing-4-enine + 2 Fe(III)-[cytochrome b5] + 2 H2O. It catalyses the reaction all-trans-retinol = 11-cis-retinol. The catalysed reaction is all-trans-retinol = 9-cis-retinol. It carries out the reaction all-trans-retinol = 13-cis-retinol. The enzyme catalyses 11-cis-retinol = 13-cis-retinol. It catalyses the reaction 11-cis-retinol = 9-cis-retinol. In terms of biological role, has sphingolipid-delta-4-desaturase activity. Converts D-erythro-sphinganine to D-erythro-sphingosine (E-sphing-4-enine). Catalyzes the equilibrium isomerization of retinols. This is Sphingolipid delta(4)-desaturase DES1 from Rattus norvegicus (Rat).